Consider the following 320-residue polypeptide: ATP-dependent 6-phosphofructokinase (320 aa).

ATP is bound at residue Gly12. ADP contacts are provided by residues 22 to 26 (RGVVR) and 55 to 60 (RYSVSD). ATP contacts are provided by residues 73–74 (RF) and 103–106 (GDGS). Position 104 (Asp104) interacts with Mg(2+). 126–128 (TID) lines the substrate pocket. The Proton acceptor role is filled by Asp128. Arg155 provides a ligand contact to ADP. Residues Arg163 and 170–172 (MGR) each bind substrate. ADP is bound by residues 186-188 (GCE), Lys212, and 214-216 (KKH). Substrate is bound by residues Glu223, Arg244, and 250-253 (HIQR).

It belongs to the phosphofructokinase type A (PFKA) family. ATP-dependent PFK group I subfamily. Prokaryotic clade 'B1' sub-subfamily. In terms of assembly, homotetramer. It depends on Mg(2+) as a cofactor.

The protein resides in the cytoplasm. The enzyme catalyses beta-D-fructose 6-phosphate + ATP = beta-D-fructose 1,6-bisphosphate + ADP + H(+). It functions in the pathway carbohydrate degradation; glycolysis; D-glyceraldehyde 3-phosphate and glycerone phosphate from D-glucose: step 3/4. Allosterically activated by ADP and other diphosphonucleosides, and allosterically inhibited by phosphoenolpyruvate. In terms of biological role, catalyzes the phosphorylation of D-fructose 6-phosphate to fructose 1,6-bisphosphate by ATP, the first committing step of glycolysis. The protein is ATP-dependent 6-phosphofructokinase of Serratia proteamaculans (strain 568).